Reading from the N-terminus, the 683-residue chain is Inositol-trisphosphate 3-kinase C (683 aa).

The tract at residues 1-124 (MRRCPCRGSL…PDRSSLRTHL (124 aa)) is disordered. Positions 13–22 (AEAGALPAAA) are enriched in low complexity. Positions 44 to 58 (PGAGAPAGRPEGGGP) are enriched in gly residues. The segment covering 105–124 (ETERPKQKTEPDRSSLRTHL) has biased composition (basic and acidic residues). Phosphoserine occurs at positions 127 and 162. Positions 147 to 308 (TDPHRSDLQF…EDGPLEEPEP (162 aa)) are disordered. Residues 196–206 (WTHQNSSSLQT) are compositionally biased toward polar residues. Residues 249–259 (SQKKQDTEAAR) show a composition bias toward basic and acidic residues. Residues 267–289 (FQIQQDTDGSWTQPSTDGSQTAP) are compositionally biased toward polar residues. A compositionally biased stretch (acidic residues) spans 297–308 (EPEDGPLEEPEP). Residues 324–332 (LCPVPRLII) carry the Nuclear export signal motif. The tract at residues 334 to 387 (PETPEPEAQPVGPPSRVEGGSGGFSSASSFDESEDDVVAGGGGASDPEDRSGSK) is disordered. Threonine 336 carries the post-translational modification Phosphothreonine. Serine 404 carries the phosphoserine modification. Residues lysine 431, 471-473 (EDL), and aspartate 484 contribute to the ATP site. Residues lysine 486, 507–513 (RKDMYEK), and 534–541 (KPRYMQWR) contribute to the substrate site. The interval 509 to 517 (DMYEKMVAV) is calmodulin-binding. 2 residues coordinate ATP: lysine 558 and aspartate 638. Substrate is bound at residue lysine 641.

Belongs to the inositol phosphokinase (IPK) family. As to expression, highly expressed in pancreas, skeletal muscle, liver, placenta and weakly in kidney and brain.

The protein resides in the nucleus. It is found in the cytoplasm. It catalyses the reaction 1D-myo-inositol 1,4,5-trisphosphate + ATP = 1D-myo-inositol 1,3,4,5-tetrakisphosphate + ADP + H(+). Activated by calcium/calmodulin. Inhibited by high concentrations of the substrate Ins(1,2,4)P3, and allosterically activated by the product Ins(1,3,4,5)P4. Its function is as follows. Catalyzes the phosphorylation of 1D-myo-inositol 1,4,5-trisphosphate (InsP3) into 1D-myo-inositol 1,3,4,5-tetrakisphosphate and participates to the regulation of calcium homeostasis. Can phosphorylate inositol 2,4,5-triphosphate to inositol 2,4,5,6-tetraphosphate. This chain is Inositol-trisphosphate 3-kinase C, found in Homo sapiens (Human).